The following is a 535-amino-acid chain: tRNA-2-methylthio-N(6)-dimethylallyladenosine synthase (535 aa).

The region spanning 24–139 is the MTTase N-terminal domain; it reads RTYEVRTFGC…LPRLLERARH (116 aa). Residues Cys33, Cys68, Cys102, Cys176, Cys180, and Cys183 each contribute to the [4Fe-4S] cluster site. A Radical SAM core domain is found at 162-392; that stretch reads RDSSFSGWVS…IALQERISLE (231 aa). Residues 395 to 465 enclose the TRAM domain; the sequence is EKLIGRDVEL…PHYLIADAAG (71 aa). Residues 512–535 form a disordered region; sequence RTREPLTSPGVGTMPLYDPTDGQR.

It belongs to the methylthiotransferase family. MiaB subfamily. Monomer. [4Fe-4S] cluster serves as cofactor.

The protein resides in the cytoplasm. The enzyme catalyses N(6)-dimethylallyladenosine(37) in tRNA + (sulfur carrier)-SH + AH2 + 2 S-adenosyl-L-methionine = 2-methylsulfanyl-N(6)-dimethylallyladenosine(37) in tRNA + (sulfur carrier)-H + 5'-deoxyadenosine + L-methionine + A + S-adenosyl-L-homocysteine + 2 H(+). Its function is as follows. Catalyzes the methylthiolation of N6-(dimethylallyl)adenosine (i(6)A), leading to the formation of 2-methylthio-N6-(dimethylallyl)adenosine (ms(2)i(6)A) at position 37 in tRNAs that read codons beginning with uridine. The protein is tRNA-2-methylthio-N(6)-dimethylallyladenosine synthase of Leifsonia xyli subsp. xyli (strain CTCB07).